We begin with the raw amino-acid sequence, 729 residues long: Elongation factor 2 (729 aa).

The tr-type G domain occupies 19–262 (EQIRNIAIAA…MVCEHFPNPV (244 aa)). Residues 28 to 35 (AHVDHGKT), 94 to 98 (DTPGH), and 148 to 151 (NKVD) contribute to the GTP site. His-597 is modified (diphthamide).

This sequence belongs to the TRAFAC class translation factor GTPase superfamily. Classic translation factor GTPase family. EF-G/EF-2 subfamily.

The protein localises to the cytoplasm. Functionally, catalyzes the GTP-dependent ribosomal translocation step during translation elongation. During this step, the ribosome changes from the pre-translocational (PRE) to the post-translocational (POST) state as the newly formed A-site-bound peptidyl-tRNA and P-site-bound deacylated tRNA move to the P and E sites, respectively. Catalyzes the coordinated movement of the two tRNA molecules, the mRNA and conformational changes in the ribosome. The sequence is that of Elongation factor 2 from Natronomonas pharaonis (strain ATCC 35678 / DSM 2160 / CIP 103997 / JCM 8858 / NBRC 14720 / NCIMB 2260 / Gabara) (Halobacterium pharaonis).